Consider the following 743-residue polypeptide: DEAD-box ATP-dependent RNA helicase 3B, chloroplastic (743 aa).

A chloroplast-targeting transit peptide spans 1-37 (MASLTLPALALALSNPGAVRLRAAAFRCWALRRRGWA). The interval 60–79 (GSDDEDGEGPYGSDADEGFE) is disordered. Acidic residues predominate over residues 61 to 79 (SDDEDGEGPYGSDADEGFE). Residues 88 to 116 (LAIARLGLPDELVATLEKRGITHLFPIQR) carry the Q motif motif. The 177-residue stretch at 119 to 295 (LIPALEGRDL…RRYLNNPLTI (177 aa)) folds into the Helicase ATP-binding domain. 132–139 (AKTGTGKT) is a binding site for ATP. Positions 243–246 (DEAD) match the DEAD box motif. The 146-residue stretch at 324-469 (VLSDLITVYA…ISPPSIEEVL (146 aa)) folds into the Helicase C-terminal domain. Residues 606–719 (LTKISKLPAL…RSSSFGGRES (114 aa)) form a disordered region. Positions 642–653 (GGGASRGRGGWD) are enriched in gly residues. The segment covering 657–671 (EDRFRRGGRSLRSDN) has biased composition (basic and acidic residues). Residues 688–719 (RSSSFGSRSSSYSSRGSPSFGGRSSSFGGRES) show a composition bias toward low complexity. A CCHC-type zinc finger spans residues 725-742 (GACFNCGESGHRATDCPN).

This sequence belongs to the DEAD box helicase family. DDX21/DDX50 subfamily.

Its subcellular location is the plastid. It localises to the chloroplast stroma. It carries out the reaction ATP + H2O = ADP + phosphate + H(+). Nuclear genome-encoded factor involved in ribosome biogenesis in chloroplasts. Binds specific group II introns in chloroplasts and facilitates their splicing. Is required for rRNA maturation in plastids and may contribute to the assembly of the large (50S) ribosomal subunit. Required for normal development of chloroplasts. In Zea mays (Maize), this protein is DEAD-box ATP-dependent RNA helicase 3B, chloroplastic.